The chain runs to 456 residues: UPF0210 protein Dde_3704 (456 aa).

The protein belongs to the UPF0210 family. In terms of assembly, homodimer.

The sequence is that of UPF0210 protein Dde_3704 from Oleidesulfovibrio alaskensis (strain ATCC BAA-1058 / DSM 17464 / G20) (Desulfovibrio alaskensis).